We begin with the raw amino-acid sequence, 560 residues long: Leucine-rich repeat and IQ domain-containing protein 4 (560 aa).

The tract at residues 1 to 20 (MSKDIKSVEHSPKIHQRNDP) is disordered. LRR repeat units lie at residues 23–47 (VNDR…IFTF), 48–70 (TELE…IQRL), 72–95 (NIRV…LLSS), 97–116 (ESLD…VVSF), 117–140 (LHAL…IFKN), 141–164 (LHHL…IVNQ), 166–187 (KLRE…LCVL), 188–210 (YTLE…IGHL), 212–233 (GLQK…LCQC), 234–256 (SQLS…FAEL), 258–281 (KMTE…RWTS), 283–301 (HLLY…SFRC), 302–325 (LVNL…ICAL), 326–348 (KNLE…LGSL), 350–371 (KLKI…VLSL), 374–397 (LEKL…IRKL), 398–422 (QSLK…SMPN), 424–443 (EVLD…ICQA), 444–466 (QALK…LDSL), and 468–489 (NLKV…VCAE). The 30-residue stretch at 504-533 (RNIMATKIQAWWRGTMVQRGFGKFGELLKP) folds into the IQ domain. The disordered stretch occupies residues 529 to 560 (ELLKPQKKGKTSPKDKKGKKDVKGKPGKGKKK). A compositionally biased stretch (basic residues) spans 533 to 560 (PQKKGKTSPKDKKGKKDVKGKPGKGKKK).

The polypeptide is Leucine-rich repeat and IQ domain-containing protein 4 (LRRIQ4) (Homo sapiens (Human)).